Here is a 346-residue protein sequence, read N- to C-terminus: Methylthioribose-1-phosphate isomerase (346 aa).

Substrate contacts are provided by residues 46 to 48 (RGA), arginine 89, and glutamine 196. Catalysis depends on aspartate 237, which acts as the Proton donor. 247–248 (NK) contributes to the substrate binding site.

This sequence belongs to the eIF-2B alpha/beta/delta subunits family. MtnA subfamily.

The catalysed reaction is 5-(methylsulfanyl)-alpha-D-ribose 1-phosphate = 5-(methylsulfanyl)-D-ribulose 1-phosphate. Its pathway is amino-acid biosynthesis; L-methionine biosynthesis via salvage pathway; L-methionine from S-methyl-5-thio-alpha-D-ribose 1-phosphate: step 1/6. Functionally, catalyzes the interconversion of methylthioribose-1-phosphate (MTR-1-P) into methylthioribulose-1-phosphate (MTRu-1-P). The sequence is that of Methylthioribose-1-phosphate isomerase from Trichlorobacter lovleyi (strain ATCC BAA-1151 / DSM 17278 / SZ) (Geobacter lovleyi).